Here is a 340-residue protein sequence, read N- to C-terminus: GTPase Obg (340 aa).

The 158-residue stretch at 1 to 158 (MSFIDEAKIY…KHIILKLKII (158 aa)) folds into the Obg domain. Residues 159–325 (SDVGIIGLPN…LSTLIKQIHK (167 aa)) form the OBG-type G domain. GTP contacts are provided by residues 165–172 (GLPNAGKS), 190–194 (FTTLE), 211–214 (DIPG), 278–281 (NKSD), and 306–308 (SSI). Residues Ser172 and Thr192 each contribute to the Mg(2+) site.

The protein belongs to the TRAFAC class OBG-HflX-like GTPase superfamily. OBG GTPase family. In terms of assembly, monomer. Requires Mg(2+) as cofactor.

The protein resides in the cytoplasm. An essential GTPase which binds GTP, GDP and possibly (p)ppGpp with moderate affinity, with high nucleotide exchange rates and a fairly low GTP hydrolysis rate. Plays a role in control of the cell cycle, stress response, ribosome biogenesis and in those bacteria that undergo differentiation, in morphogenesis control. The sequence is that of GTPase Obg from Ehrlichia canis (strain Jake).